Here is a 260-residue protein sequence, read N- to C-terminus: NAD-capped RNA hydrolase NudC (260 aa).

Arg74 contributes to the substrate binding site. Zn(2+) contacts are provided by Cys103, Cys106, Cys121, and Cys124. Tyr129 is a binding site for substrate. The 124-residue stretch at 130 to 253 folds into the Nudix hydrolase domain; it reads PRIFPCIIVA…TIARALIEQT (124 aa). The a divalent metal cation site is built by Ala163, Glu179, and Glu183. The Nudix box signature appears at 164–185; the sequence is GFLEAGETLEDCVAREVHEETG. 197 to 204 serves as a coordination point for substrate; sequence QPWAFPSS. Glu224 contacts a divalent metal cation. Ala246 contributes to the substrate binding site.

The protein belongs to the Nudix hydrolase family. NudC subfamily. Homodimer. Mg(2+) serves as cofactor. Requires Mn(2+) as cofactor. It depends on Zn(2+) as a cofactor.

The enzyme catalyses a 5'-end NAD(+)-phospho-ribonucleoside in mRNA + H2O = a 5'-end phospho-adenosine-phospho-ribonucleoside in mRNA + beta-nicotinamide D-ribonucleotide + 2 H(+). The catalysed reaction is NAD(+) + H2O = beta-nicotinamide D-ribonucleotide + AMP + 2 H(+). It carries out the reaction NADH + H2O = reduced beta-nicotinamide D-ribonucleotide + AMP + 2 H(+). In terms of biological role, mRNA decapping enzyme that specifically removes the nicotinamide adenine dinucleotide (NAD) cap from a subset of mRNAs by hydrolyzing the diphosphate linkage to produce nicotinamide mononucleotide (NMN) and 5' monophosphate mRNA. The NAD-cap is present at the 5'-end of some mRNAs and stabilizes RNA against 5'-processing. Has preference for mRNAs with a 5'-end purine. Catalyzes the hydrolysis of a broad range of dinucleotide pyrophosphates. In Vibrio parahaemolyticus serotype O3:K6 (strain RIMD 2210633), this protein is NAD-capped RNA hydrolase NudC.